The sequence spans 122 residues: Ribosome-binding factor A (122 aa).

Belongs to the RbfA family. As to quaternary structure, monomer. Binds 30S ribosomal subunits, but not 50S ribosomal subunits or 70S ribosomes.

It is found in the cytoplasm. Functionally, one of several proteins that assist in the late maturation steps of the functional core of the 30S ribosomal subunit. Associates with free 30S ribosomal subunits (but not with 30S subunits that are part of 70S ribosomes or polysomes). Required for efficient processing of 16S rRNA. May interact with the 5'-terminal helix region of 16S rRNA. This Pelobacter propionicus (strain DSM 2379 / NBRC 103807 / OttBd1) protein is Ribosome-binding factor A.